Here is a 204-residue protein sequence, read N- to C-terminus: Proteasome subunit beta type-3 (204 aa).

Belongs to the peptidase T1B family. In terms of assembly, the 26S proteasome consists of a 20S proteasome core and two 19S regulatory subunits. The 20S proteasome core is composed of 28 subunits that are arranged in four stacked rings, resulting in a barrel-shaped structure. The two end rings are each formed by seven alpha subunits, and the two central rings are each formed by seven beta subunits. The catalytic chamber with the active sites is on the inside of the barrel.

It localises to the cytoplasm. The protein localises to the nucleus. Non-catalytic component of the proteasome, a multicatalytic proteinase complex which is characterized by its ability to cleave peptides with Arg, Phe, Tyr, Leu, and Glu adjacent to the leaving group at neutral or slightly basic pH. The proteasome has an ATP-dependent proteolytic activity. The protein is Proteasome subunit beta type-3 (PBC1) of Picea mariana (Black spruce).